A 577-amino-acid polypeptide reads, in one-letter code: MNIQALLSEKVSQAMIAAGAPADCEPQVRQSAKVQFGDYQANGMMAVAKKLGMAPRQLAEQVLTHLDLSGIASKVEIAGPGFINIFLEPAFLAEQVQQALTSDRLGVSQPTRQTIVVDYSAPNVAKEMHVGHLRSTIIGDAAVRTLEFLGHHVIRANHVGDWGTQFGMLIAWLEKQQQENAGDMALADLEGFYRDAKKHYDEDEAFAERARNYVVKLQSGDTYFREMWRKLVDITMTQNQITYDRLNVTLTRDDVMGESLYNPMLPGIVADLKAKGLAVESEGATVVFLDEFKNKEGDPMGVIIQKKDGGYLYTTTDIACAKYRYETLHADRVLYYIDSRQHQHLMQAWTIVRKAGYVPDSVPLEHHMFGMMLGKDGKPFKTRTGGTVKLADLLDEALERARRLVAEKNPDMPADELEKLANAVGIGAVKYADLSKNRTTDYIFDWDNMLAFEGNTAPYMQYAYTRVLSVFRKADIDEQALASAPVIISEDREAQLAARLLQFEETLTVVAREGTPHVMCAYLYDVAGLFSGFYEHCPILSAENDAVRNSRLKLAQLTAKTLKLGLDTLGIETVERM.

Positions 122 to 132 (PNVAKEMHVGH) match the 'HIGH' region motif.

Belongs to the class-I aminoacyl-tRNA synthetase family. In terms of assembly, monomer.

The protein resides in the cytoplasm. The enzyme catalyses tRNA(Arg) + L-arginine + ATP = L-arginyl-tRNA(Arg) + AMP + diphosphate. The chain is Arginine--tRNA ligase from Salmonella paratyphi A (strain ATCC 9150 / SARB42).